We begin with the raw amino-acid sequence, 328 residues long: Serine protease 27 (328 aa).

The N-terminal stretch at 1–22 (MRQPHITALLLLPLLLRSGTEG) is a signal peptide. A propeptide spans 23–37 (AEAMRACGHPRMFNR) (activation peptide). One can recognise a Peptidase S1 domain in the interval 38-280 (MVGGEDALEG…HYQWIHQIIP (243 aa)). A disulfide bridge links Cys-63 with Cys-79. His-78 functions as the Charge relay system in the catalytic mechanism. Asn-82 carries an N-linked (GlcNAc...) asparagine glycan. Asp-127 serves as the catalytic Charge relay system. Cystine bridges form between Cys-161-Cys-238, Cys-194-Cys-217, and Cys-228-Cys-256. Ser-232 serves as the catalytic Charge relay system.

This sequence belongs to the peptidase S1 family.

It is found in the secreted. In Rattus norvegicus (Rat), this protein is Serine protease 27 (Prss27).